The primary structure comprises 205 residues: NADH-quinone oxidoreductase subunit I (205 aa).

4Fe-4S ferredoxin-type domains lie at 75–104 and 114–143; these read RLLE…METS and HEYT…HGGR. [4Fe-4S] cluster-binding residues include cysteine 84, cysteine 87, cysteine 90, cysteine 94, cysteine 123, cysteine 126, cysteine 129, and cysteine 133.

The protein belongs to the complex I 23 kDa subunit family. In terms of assembly, NDH-1 is composed of 14 different subunits. Subunits NuoA, H, J, K, L, M, N constitute the membrane sector of the complex. The cofactor is [4Fe-4S] cluster.

It is found in the cell inner membrane. It catalyses the reaction a quinone + NADH + 5 H(+)(in) = a quinol + NAD(+) + 4 H(+)(out). In terms of biological role, NDH-1 shuttles electrons from NADH, via FMN and iron-sulfur (Fe-S) centers, to quinones in the respiratory chain. The immediate electron acceptor for the enzyme in this species is believed to be ubiquinone. Couples the redox reaction to proton translocation (for every two electrons transferred, four hydrogen ions are translocated across the cytoplasmic membrane), and thus conserves the redox energy in a proton gradient. The chain is NADH-quinone oxidoreductase subunit I from Wolinella succinogenes (strain ATCC 29543 / DSM 1740 / CCUG 13145 / JCM 31913 / LMG 7466 / NCTC 11488 / FDC 602W) (Vibrio succinogenes).